A 1002-amino-acid chain; its full sequence is Probable transport protein MmpL10 (1002 aa).

12 consecutive transmembrane segments (helical) span residues 1-21 (MVGCWVALALVLPMAVPSLAE), 177-197 (IAVMLLVILMVIYRNPVTMLL), 199-219 (LVTIGASLMTAQALVAGVSLV), 228-248 (AIVLLSAMIAGAGTDYAVFLI), 268-288 (AMMSVGKVIAASAATVGITFL), 306-326 (AIGIAVSFLAAVTLLPAILVL), 358-378 (YLGASLIGLVALASCASLAHF), 806-826 (IVAVTVVVVILILMALLRAIV), 835-855 (VVISYMSAIGLGVVVFQVFLG), 862-882 (VPGLAFVVLVAVGADYNMLLA), 901-921 (VRCTGGVITAAGLIFAASMSG), and 923-943 (LFSSIGTVVQGGFIIGVGILI).

This sequence belongs to the resistance-nodulation-cell division (RND) (TC 2.A.6) family. MmpL subfamily.

The protein localises to the cell membrane. The protein is Probable transport protein MmpL10 (mmpL10) of Mycobacterium bovis (strain ATCC BAA-935 / AF2122/97).